Reading from the N-terminus, the 243-residue chain is 7-cyano-7-deazaguanine synthase (243 aa).

Residue 18-28 participates in ATP binding; sequence FSGGQDSATCL. Zn(2+)-binding residues include Cys-206, Cys-221, Cys-224, and Cys-227.

It belongs to the QueC family. Zn(2+) is required as a cofactor.

The catalysed reaction is 7-carboxy-7-deazaguanine + NH4(+) + ATP = 7-cyano-7-deazaguanine + ADP + phosphate + H2O + H(+). Its pathway is purine metabolism; 7-cyano-7-deazaguanine biosynthesis. Its function is as follows. Catalyzes the ATP-dependent conversion of 7-carboxy-7-deazaguanine (CDG) to 7-cyano-7-deazaguanine (preQ(0)). This is 7-cyano-7-deazaguanine synthase from Methylorubrum extorquens (strain CM4 / NCIMB 13688) (Methylobacterium extorquens).